The following is a 153-amino-acid chain: Small ribosomal subunit protein bS16 (153 aa).

Over residues 121–131 (AEAAAKAKAEA) the composition is skewed to basic and acidic residues. The segment at 121-153 (AEAAAKAKAEAEAAAAAEEAPAEEAAEEAPAED) is disordered. Over residues 140 to 153 (APAEEAAEEAPAED) the composition is skewed to acidic residues.

This sequence belongs to the bacterial ribosomal protein bS16 family.

In Bifidobacterium longum (strain DJO10A), this protein is Small ribosomal subunit protein bS16.